The primary structure comprises 343 residues: L-ornithine/L-arginine 3-hydroxylase (343 aa).

Histidine 147 and glutamate 149 together coordinate Fe cation. Over residues 199–215 (MPDNSHLPQNTAESTGD) the composition is skewed to polar residues. A disordered region spans residues 199-218 (MPDNSHLPQNTAESTGDPTK). Histidine 302 is a binding site for Fe cation. Arginine 316 contributes to the 2-oxoglutarate binding site.

The protein belongs to the clavaminate synthase family. Fe(2+) is required as a cofactor.

It carries out the reaction L-ornithine + 2-oxoglutarate + O2 = (3S)-3-hydroxy-L-ornithine + succinate + CO2. The enzyme catalyses L-arginine + 2-oxoglutarate + O2 = (2S,3S)-hydroxyarginine + succinate + CO2. Alpha-ketoglutarate-dependent dioxygenase that in vitro catalyzes the regio- and stereoselective hydroxylation of L-ornithine and L-arginine, leading to (3S)-3-hydroxy-L-ornithine and (3S)-3-hydroxy-L-arginine, respectively. Cannot use L-lysine, D-ornithine, or D-arginine as substrate. In Catenulispora acidiphila (strain DSM 44928 / JCM 14897 / NBRC 102108 / NRRL B-24433 / ID139908), this protein is L-ornithine/L-arginine 3-hydroxylase.